Here is a 739-residue protein sequence, read N- to C-terminus: UPF0313 protein YgiQ (739 aa).

The Radical SAM core domain maps to alanine 372–alanine 650. Residues cysteine 386, cysteine 390, and cysteine 393 each contribute to the [4Fe-4S] cluster site. A disordered region spans residues glutamate 686–arginine 739. A compositionally biased stretch (polar residues) spans methionine 704–proline 724. A compositionally biased stretch (basic residues) spans alanine 729–arginine 739.

This sequence belongs to the UPF0313 family. It depends on [4Fe-4S] cluster as a cofactor.

The protein is UPF0313 protein YgiQ of Escherichia coli O157:H7.